Reading from the N-terminus, the 305-residue chain is Ornithine carbamoyltransferase (305 aa).

Residues 54 to 57 (STRT), Gln-81, Arg-105, and 132 to 135 (HPCQ) contribute to the carbamoyl phosphate site. Residues Asn-163, Asp-223, and 227–228 (SM) each bind L-ornithine. Residues 262–263 (CL) and Arg-290 contribute to the carbamoyl phosphate site.

The protein belongs to the aspartate/ornithine carbamoyltransferase superfamily. OTCase family.

Its subcellular location is the cytoplasm. It catalyses the reaction carbamoyl phosphate + L-ornithine = L-citrulline + phosphate + H(+). It functions in the pathway amino-acid biosynthesis; L-arginine biosynthesis; L-arginine from L-ornithine and carbamoyl phosphate: step 1/3. Functionally, reversibly catalyzes the transfer of the carbamoyl group from carbamoyl phosphate (CP) to the N(epsilon) atom of ornithine (ORN) to produce L-citrulline. The chain is Ornithine carbamoyltransferase from Agrobacterium fabrum (strain C58 / ATCC 33970) (Agrobacterium tumefaciens (strain C58)).